A 418-amino-acid chain; its full sequence is Histidinol dehydrogenase (418 aa).

3 residues coordinate NAD(+): tyrosine 119, glutamine 180, and asparagine 203. The substrate site is built by threonine 226, glutamine 248, and histidine 251. The Zn(2+) site is built by glutamine 248 and histidine 251. Catalysis depends on proton acceptor residues glutamate 316 and histidine 317. Substrate contacts are provided by histidine 317, aspartate 350, glutamate 404, and histidine 409. A Zn(2+)-binding site is contributed by aspartate 350. Histidine 409 contacts Zn(2+).

It belongs to the histidinol dehydrogenase family. Requires Zn(2+) as cofactor.

The catalysed reaction is L-histidinol + 2 NAD(+) + H2O = L-histidine + 2 NADH + 3 H(+). Its pathway is amino-acid biosynthesis; L-histidine biosynthesis; L-histidine from 5-phospho-alpha-D-ribose 1-diphosphate: step 9/9. Its function is as follows. Catalyzes the sequential NAD-dependent oxidations of L-histidinol to L-histidinaldehyde and then to L-histidine. This chain is Histidinol dehydrogenase, found in Staphylococcus aureus (strain MRSA252).